A 400-amino-acid chain; its full sequence is Queuine tRNA-ribosyltransferase catalytic subunit (400 aa).

Catalysis depends on Asp89, which acts as the Proton acceptor. Substrate-binding positions include Asp89 to Phe93, Asp143, Gln185, and Gly212. The tract at residues Gly243 to Asp249 is RNA binding. Asp262 (nucleophile) is an active-site residue. Residues Thr267–Arg271 form an RNA binding; important for wobble base 34 recognition region. 4 residues coordinate Zn(2+): Cys301, Cys303, Cys306, and His331.

This sequence belongs to the queuine tRNA-ribosyltransferase family. In terms of assembly, heterodimer of a catalytic subunit and an accessory subunit. The cofactor is Zn(2+).

It localises to the cytoplasm. It catalyses the reaction guanosine(34) in tRNA + queuine = queuosine(34) in tRNA + guanine. Its function is as follows. Catalytic subunit of the queuine tRNA-ribosyltransferase (TGT) that catalyzes the base-exchange of a guanine (G) residue with queuine (Q) at position 34 (anticodon wobble position) in tRNAs with GU(N) anticodons (tRNA-Asp, -Asn, -His and -Tyr), resulting in the hypermodified nucleoside queuosine (7-(((4,5-cis-dihydroxy-2-cyclopenten-1-yl)amino)methyl)-7-deazaguanosine). Catalysis occurs through a double-displacement mechanism. The nucleophile active site attacks the C1' of nucleotide 34 to detach the guanine base from the RNA, forming a covalent enzyme-RNA intermediate. The proton acceptor active site deprotonates the incoming queuine, allowing a nucleophilic attack on the C1' of the ribose to form the product. This is Queuine tRNA-ribosyltransferase catalytic subunit from Caenorhabditis elegans.